The chain runs to 46 residues: Aspartate aminotransferase 1 (46 aa).

This sequence belongs to the class-I pyridoxal-phosphate-dependent aminotransferase family. As to quaternary structure, homodimer. Pyridoxal 5'-phosphate is required as a cofactor.

The enzyme catalyses L-aspartate + 2-oxoglutarate = oxaloacetate + L-glutamate. In terms of biological role, important for the metabolism of amino acids and Krebs-cycle related organic acids. In plants, it is involved in nitrogen metabolism and in aspects of carbon and energy metabolism. The polypeptide is Aspartate aminotransferase 1 (Pseudotsuga menziesii (Douglas-fir)).